The following is a 315-amino-acid chain: Cytochrome f (315 aa).

The first 36 residues, 1 to 36, serve as a signal peptide directing secretion; it reads MKQSLLSVLTKKSLRLLAALFLVVTSVFSLPQAAQA. Residues Phe37, Cys57, Cys60, and His61 each coordinate heme. The helical transmembrane segment at 281–301 threads the bilayer; it reads IKWLMVFFSAIMISQTLLVLK.

Belongs to the cytochrome f family. The 4 large subunits of the cytochrome b6-f complex are cytochrome b6, subunit IV (17 kDa polypeptide, PetD), cytochrome f and the Rieske protein, while the 4 small subunits are PetG, PetL, PetM and PetN. The complex functions as a dimer. It depends on heme as a cofactor.

Its subcellular location is the cellular thylakoid membrane. In terms of biological role, component of the cytochrome b6-f complex, which mediates electron transfer between photosystem II (PSII) and photosystem I (PSI), cyclic electron flow around PSI, and state transitions. In Acaryochloris marina (strain MBIC 11017), this protein is Cytochrome f.